The chain runs to 508 residues: Glycerol kinase (508 aa).

Thr14 lines the ADP pocket. ATP contacts are provided by Thr14, Thr15, and Ser16. A sn-glycerol 3-phosphate-binding site is contributed by Thr14. ADP is bound at residue Arg18. Sn-glycerol 3-phosphate is bound by residues Arg84, Glu85, and Tyr136. Glycerol is bound by residues Arg84, Glu85, and Tyr136. At His232 the chain carries Phosphohistidine; by HPr. Asp246 provides a ligand contact to sn-glycerol 3-phosphate. Positions 246 and 247 each coordinate glycerol. Positions 268 and 311 each coordinate ADP. ATP contacts are provided by Thr268, Gly311, Gln315, and Gly412. Residues Gly412 and Asn416 each coordinate ADP.

This sequence belongs to the FGGY kinase family. As to quaternary structure, homotetramer and homodimer (in equilibrium). Post-translationally, the phosphoenolpyruvate-dependent sugar phosphotransferase system (PTS), including enzyme I, and histidine-containing protein (HPr) are required for the phosphorylation, which leads to the activation of the enzyme.

It catalyses the reaction glycerol + ATP = sn-glycerol 3-phosphate + ADP + H(+). The protein operates within polyol metabolism; glycerol degradation via glycerol kinase pathway; sn-glycerol 3-phosphate from glycerol: step 1/1. Its activity is regulated as follows. Activated by phosphorylation and inhibited by fructose 1,6-bisphosphate (FBP). Functionally, key enzyme in the regulation of glycerol uptake and metabolism. Catalyzes the phosphorylation of glycerol to yield sn-glycerol 3-phosphate. The protein is Glycerol kinase of Streptococcus pyogenes serotype M28 (strain MGAS6180).